Here is a 529-residue protein sequence, read N- to C-terminus: 1,4-beta-D-glucan cellobiohydrolase xynA (529 aa).

The first 25 residues, 1–25, serve as a signal peptide directing secretion; it reads MSALNSFNMYKSALILGSLLATAGA. The catalytic stretch occupies residues 26-456; the sequence is QQIGTYTAET…SDIKVGPFNS (431 aa). Asn-70 and Asn-219 each carry an N-linked (GlcNAc...) asparagine glycan. The active-site Nucleophile is Glu-234. The active-site Proton donor is the Glu-239. A glycan (N-linked (GlcNAc...) asparagine) is linked at Asn-413. A disordered region spans residues 413–438; the sequence is NETGTPGAARGSCPTTSGNPKTVESQ. The segment covering 425 to 438 has biased composition (polar residues); sequence CPTTSGNPKTVESQ. Asn-455 carries an N-linked (GlcNAc...) asparagine glycan. Residues 457-493 form a thr-rich linker region; sequence TFSGGTSTGGSTTTTASGTTSTKASTTSTSSTSTGTG. The disordered stretch occupies residues 460–491; sequence GGTSTGGSTTTTASGTTSTKASTTSTSSTSTG. The 37-residue stretch at 493–529 folds into the CBM1 domain; the sequence is GVAAHWGQCGGQGWTGPTTCASGTTCTVVNPYYSQCL. 2 disulfide bridges follow: Cys-501–Cys-518 and Cys-512–Cys-528.

The protein belongs to the glycosyl hydrolase 7 (cellulase C) family.

Its subcellular location is the secreted. The enzyme catalyses Hydrolysis of (1-&gt;4)-beta-D-glucosidic linkages in cellulose and cellotetraose, releasing cellobiose from the non-reducing ends of the chains.. Its activity is regulated as follows. Cellobiose inhibits xynA at high concentrations. Functionally, the biological conversion of cellulose to glucose generally requires three types of hydrolytic enzymes: (1) Endoglucanases which cut internal beta-1,4-glucosidic bonds; (2) Exocellobiohydrolases that cut the disaccharide cellobiose from the non-reducing end of the cellulose polymer chain; (3) Beta-1,4-glucosidases which hydrolyze the cellobiose and other short cello-oligosaccharides to glucose. The sequence is that of 1,4-beta-D-glucan cellobiohydrolase xynA (xynA) from Talaromyces funiculosus (Fruitlet core rot fungus).